Here is a 358-residue protein sequence, read N- to C-terminus: MATDNDSFPWDQDSILSSDMFSATSTELCYENLNRSCVRSPYSPGPRLILYAVFGFGAALAVCGNLLVMTSILHFRQLHSPANFLVVSLACADFLVGLTVMPFSTVRSVEGCWYFGESYCKLHTCFDVSFCYCSIFHLCFISVDRYIAVSDPLTYPTRFTAFVSGKCITFSWLLSTIYGFSLLYTGANEAGLEDLVSALTCVGGCQLAVNQSWVFINFLLFLIPTLVMITVYSKIFLIAKQQAQNIEKMSKQTARASDSYKDRVAKRERKAAKTLGIAVAAFLLSWLPYFIDSIIDAFLGFITPTYVYEILVWIAYYNSAMNPLIYAFFYPWFRKAIKLIVSGKVLRENSSTTNLFPE.

Residues 1–47 (MATDNDSFPWDQDSILSSDMFSATSTELCYENLNRSCVRSPYSPGPR) are Extracellular-facing. Asn5 and Asn34 each carry an N-linked (GlcNAc...) asparagine glycan. Cystine bridges form between Cys37–Cys201 and Cys120–Cys205. The helical transmembrane segment at 48-68 (LILYAVFGFGAALAVCGNLLV) threads the bilayer. Topologically, residues 69 to 83 (MTSILHFRQLHSPAN) are cytoplasmic. The helical transmembrane segment at 84-104 (FLVVSLACADFLVGLTVMPFS) threads the bilayer. The Extracellular portion of the chain corresponds to 105–121 (TVRSVEGCWYFGESYCK). Residues 122–143 (LHTCFDVSFCYCSIFHLCFISV) traverse the membrane as a helical segment. At 144–166 (DRYIAVSDPLTYPTRFTAFVSGK) the chain is on the cytoplasmic side. Residues 167-187 (CITFSWLLSTIYGFSLLYTGA) traverse the membrane as a helical segment. Over 188 to 212 (NEAGLEDLVSALTCVGGCQLAVNQS) the chain is Extracellular. N-linked (GlcNAc...) asparagine glycosylation is present at Asn210. Residues 213–233 (WVFINFLLFLIPTLVMITVYS) form a helical membrane-spanning segment. Residues 234–274 (KIFLIAKQQAQNIEKMSKQTARASDSYKDRVAKRERKAAKT) are Cytoplasmic-facing. A helical membrane pass occupies residues 275-295 (LGIAVAAFLLSWLPYFIDSII). Topologically, residues 296–309 (DAFLGFITPTYVYE) are extracellular. The chain crosses the membrane as a helical span at residues 310-333 (ILVWIAYYNSAMNPLIYAFFYPWF). Over 334–358 (RKAIKLIVSGKVLRENSSTTNLFPE) the chain is Cytoplasmic.

The protein belongs to the G-protein coupled receptor 1 family. As to expression, specifically expressed in neurons of the olfactory epithelium.

The protein localises to the cell membrane. Functionally, olfactory receptor specific for N,N-dimethylalkylamines trace amines, such as N,N-dimethylcyclohexylamine. Trace amine compounds are enriched in animal body fluids and act on trace amine-associated receptors (TAARs) to elicit both intraspecific and interspecific innate behaviors. Ligand-binding causes a conformation change that triggers signaling via G(s)-class of G alpha proteins (GNAL or GNAS). In Mus musculus (Mouse), this protein is Trace amine-associated receptor 7b.